The chain runs to 449 residues: UDP-N-acetylmuramoylalanine--D-glutamate ligase (449 aa).

113-119 (GTNGKTT) is a binding site for ATP.

This sequence belongs to the MurCDEF family.

The protein resides in the cytoplasm. It carries out the reaction UDP-N-acetyl-alpha-D-muramoyl-L-alanine + D-glutamate + ATP = UDP-N-acetyl-alpha-D-muramoyl-L-alanyl-D-glutamate + ADP + phosphate + H(+). Its pathway is cell wall biogenesis; peptidoglycan biosynthesis. In terms of biological role, cell wall formation. Catalyzes the addition of glutamate to the nucleotide precursor UDP-N-acetylmuramoyl-L-alanine (UMA). This is UDP-N-acetylmuramoylalanine--D-glutamate ligase from Microcystis aeruginosa (strain NIES-843 / IAM M-2473).